Consider the following 374-residue polypeptide: Probable tRNA pseudouridine synthase D (374 aa).

The active-site Nucleophile is Asp81. One can recognise a TRUD domain in the interval 141-340 (VFPNYFDVQR…RKGFQKMYDL (200 aa)).

Belongs to the pseudouridine synthase TruD family.

It catalyses the reaction uridine(13) in tRNA = pseudouridine(13) in tRNA. Its function is as follows. Could be responsible for synthesis of pseudouridine from uracil-13 in transfer RNAs. In Nanoarchaeum equitans (strain Kin4-M), this protein is Probable tRNA pseudouridine synthase D.